We begin with the raw amino-acid sequence, 827 residues long: Transcription factor SOX-6 (827 aa).

Polar residues predominate over residues 1-10; sequence MSSKQATSPF. Residues 1-51 are disordered; that stretch reads MSSKQATSPFACTVDGEETMTQDLTSREKEEGSDQHPASHLPLHPIMHNKP. Residues 25–34 are compositionally biased toward basic and acidic residues; sequence TSREKEEGSD. Threonine 119 carries the phosphothreonine modification. A coiled-coil region spans residues 184-257; that stretch reads LAEKERQLST…QHKINLLQQQ (74 aa). 2 disordered regions span residues 329 to 360 and 380 to 470; these read HVSH…GGHS and SPGA…PIGG. Residues 341 to 357 are compositionally biased toward basic and acidic residues; the sequence is GISDRLGRNLDPYEHGG. Serine 399 carries the phosphoserine modification. Threonine 401 is modified (phosphothreonine). Glycyl lysine isopeptide (Lys-Gly) (interchain with G-Cter in SUMO) cross-links involve residues lysine 404 and lysine 417. 2 stretches are compositionally biased toward polar residues: residues 421 to 431 and 439 to 461; these read TAQPLNLSSRP and SPTS…LPNK. Phosphoserine is present on residues serine 439 and serine 442. The HMG box DNA-binding region spans 620 to 688; that stretch reads IKRPMNAFMV…IHLEKYPNYK (69 aa). Disordered regions lie at residues 752–772 and 786–827; these read TPSP…EPSL and ASLA…VSAN. Residues 795 to 808 are compositionally biased toward acidic residues; it reads NGEDEMEAYDDYED.

Homodimer. Interacts with DAZAP2. May interact with CENPK. Post-translationally, sumoylation inhibits the transcriptional activity.

Its subcellular location is the nucleus. It localises to the cytoplasm. In terms of biological role, transcription factor that plays a key role in several developmental processes, including neurogenesis, chondrocytes differentiation and cartilage formation. Specifically binds the 5'-AACAAT-3' DNA motif present in enhancers and super-enhancers and promotes expression of genes important for chondrogenesis. Required for overt chondrogenesis when condensed prechondrocytes differentiate into early stage chondrocytes: SOX5 and SOX6 cooperatively bind with SOX9 on active enhancers and super-enhancers associated with cartilage-specific genes, and thereby potentiate SOX9's ability to transactivate. Not involved in precartilaginous condensation, the first step in chondrogenesis, during which skeletal progenitors differentiate into prechondrocytes. Together with SOX5, required to form and maintain a pool of highly proliferating chondroblasts between epiphyses and metaphyses, to form columnar chondroblasts, delay chondrocyte prehypertrophy but promote hypertrophy, and to delay terminal differentiation of chondrocytes on contact with ossification fronts. Binds to the proximal promoter region of the myelin protein MPZ gene, and is thereby involved in the differentiation of oligodendroglia in the developing spinal tube. Binds to the gene promoter of MBP and acts as a transcriptional repressor. The chain is Transcription factor SOX-6 from Rattus norvegicus (Rat).